We begin with the raw amino-acid sequence, 1814 residues long: U3 small nucleolar RNA-associated protein 10 (1814 aa).

Residues 583–620 (LDFQALLPFLLVALTDASERVRREAAAALAAVGSLYKK) form an HEAT 1 repeat. A run of 2 helical transmembrane segments spans residues 942-962 (IQSG…AIVN) and 998-1018 (ALLL…HSVM). HEAT repeat units lie at residues 1042–1079 (QTID…AFEH), 1249–1286 (LTLV…QNPE), 1293–1331 (IRVL…KYGK), and 1770–1807 (ALLP…VLGE).

Belongs to the HEATR1/UTP10 family. In terms of assembly, component of the ribosomal small subunit (SSU) processome.

It localises to the nucleus. The protein resides in the nucleolus. Its subcellular location is the membrane. Involved in nucleolar processing of pre-18S ribosomal RNA. Involved in ribosome biosynthesis. The chain is U3 small nucleolar RNA-associated protein 10 from Neosartorya fischeri (strain ATCC 1020 / DSM 3700 / CBS 544.65 / FGSC A1164 / JCM 1740 / NRRL 181 / WB 181) (Aspergillus fischerianus).